The chain runs to 112 residues: Gastrula zinc finger protein XlCGF9.1 (112 aa).

4 consecutive C2H2-type zinc fingers follow at residues 6–28 (FICS…MKIH), 34–56 (FCCP…ERTH), 62–84 (FTCP…RIIH), and 90–112 (YSCP…FKIH).

It belongs to the krueppel C2H2-type zinc-finger protein family.

It localises to the nucleus. Functionally, may be involved in transcriptional regulation. This chain is Gastrula zinc finger protein XlCGF9.1, found in Xenopus laevis (African clawed frog).